The chain runs to 362 residues: Phosphoserine aminotransferase (362 aa).

S9 and R42 together coordinate L-glutamate. Residues 76–77 (GR), W102, T153, D174, and Q197 contribute to the pyridoxal 5'-phosphate site. N6-(pyridoxal phosphate)lysine is present on K198. Residue 239–240 (NT) participates in pyridoxal 5'-phosphate binding.

The protein belongs to the class-V pyridoxal-phosphate-dependent aminotransferase family. SerC subfamily. In terms of assembly, homodimer. It depends on pyridoxal 5'-phosphate as a cofactor.

The protein localises to the cytoplasm. It carries out the reaction O-phospho-L-serine + 2-oxoglutarate = 3-phosphooxypyruvate + L-glutamate. The catalysed reaction is 4-(phosphooxy)-L-threonine + 2-oxoglutarate = (R)-3-hydroxy-2-oxo-4-phosphooxybutanoate + L-glutamate. It participates in amino-acid biosynthesis; L-serine biosynthesis; L-serine from 3-phospho-D-glycerate: step 2/3. Its pathway is cofactor biosynthesis; pyridoxine 5'-phosphate biosynthesis; pyridoxine 5'-phosphate from D-erythrose 4-phosphate: step 3/5. In terms of biological role, catalyzes the reversible conversion of 3-phosphohydroxypyruvate to phosphoserine and of 3-hydroxy-2-oxo-4-phosphonooxybutanoate to phosphohydroxythreonine. The protein is Phosphoserine aminotransferase of Escherichia coli O6:K15:H31 (strain 536 / UPEC).